A 407-amino-acid chain; its full sequence is Phosphopentomutase (407 aa).

Positions 10, 306, 311, 347, 348, and 359 each coordinate Mn(2+).

The protein belongs to the phosphopentomutase family. Requires Mn(2+) as cofactor.

The protein resides in the cytoplasm. It carries out the reaction 2-deoxy-alpha-D-ribose 1-phosphate = 2-deoxy-D-ribose 5-phosphate. It catalyses the reaction alpha-D-ribose 1-phosphate = D-ribose 5-phosphate. Its pathway is carbohydrate degradation; 2-deoxy-D-ribose 1-phosphate degradation; D-glyceraldehyde 3-phosphate and acetaldehyde from 2-deoxy-alpha-D-ribose 1-phosphate: step 1/2. Its function is as follows. Isomerase that catalyzes the conversion of deoxy-ribose 1-phosphate (dRib-1-P) and ribose 1-phosphate (Rib-1-P) to deoxy-ribose 5-phosphate (dRib-5-P) and ribose 5-phosphate (Rib-5-P), respectively. In Photorhabdus laumondii subsp. laumondii (strain DSM 15139 / CIP 105565 / TT01) (Photorhabdus luminescens subsp. laumondii), this protein is Phosphopentomutase.